Consider the following 113-residue polypeptide: ATP-dependent Clp protease adapter protein ClpS (113 aa).

A disordered region spans residues 1 to 24 (MTAQLHMMSDKHDQDNDASVLLQT).

It belongs to the ClpS family. Binds to the N-terminal domain of the chaperone ClpA.

Its function is as follows. Involved in the modulation of the specificity of the ClpAP-mediated ATP-dependent protein degradation. In Ruegeria pomeroyi (strain ATCC 700808 / DSM 15171 / DSS-3) (Silicibacter pomeroyi), this protein is ATP-dependent Clp protease adapter protein ClpS.